The primary structure comprises 71 residues: uncharacterized protein (71 aa).

Over 1–16 the chain is Cytoplasmic; the sequence is MLLLYTVMILTCIIYK. Residues 17-38 traverse the membrane as a helical segment; it reads LVPDNKYWPIHMFFFIMIYIVY. Over 39–69 the chain is Extracellular; sequence MYEKLDIHEKSQFWNYTMARLSGHPVPTIIC. Asparagine 53 carries N-linked (GlcNAc...) asparagine; by host glycosylation.

Belongs to the asfivirus X69R family.

It is found in the host membrane. This is an uncharacterized protein from African swine fever virus (isolate Pig/Kenya/KEN-50/1950) (ASFV).